The sequence spans 644 residues: Ribonuclease R (644 aa).

Positions 211 to 529 (RINYSHIPFI…LHRLLKELLF (319 aa)) constitute an RNB domain. Residues 573–644 (LEFLEKEFLG…ITERIKEHVS (72 aa)) enclose the S1 motif domain.

It belongs to the RNR ribonuclease family. RNase R subfamily.

The protein resides in the cytoplasm. The enzyme catalyses Exonucleolytic cleavage in the 3'- to 5'-direction to yield nucleoside 5'-phosphates.. 3'-5' exoribonuclease that releases 5'-nucleoside monophosphates and is involved in maturation of structured RNAs. This chain is Ribonuclease R, found in Helicobacter pylori (strain J99 / ATCC 700824) (Campylobacter pylori J99).